The sequence spans 273 residues: Ribosomal protein L11 methyltransferase (273 aa).

Positions 112, 133, 155, and 203 each coordinate S-adenosyl-L-methionine.

Belongs to the methyltransferase superfamily. PrmA family.

It localises to the cytoplasm. It catalyses the reaction L-lysyl-[protein] + 3 S-adenosyl-L-methionine = N(6),N(6),N(6)-trimethyl-L-lysyl-[protein] + 3 S-adenosyl-L-homocysteine + 3 H(+). Methylates ribosomal protein L11. This Deinococcus radiodurans (strain ATCC 13939 / DSM 20539 / JCM 16871 / CCUG 27074 / LMG 4051 / NBRC 15346 / NCIMB 9279 / VKM B-1422 / R1) protein is Ribosomal protein L11 methyltransferase.